A 216-amino-acid chain; its full sequence is MKIGLMGGTFNPIHMAHLRIAEEARELCGLDRVLFIPVADPPHKPLAGEVPFHQRCQMVRLAIAGNRAFELSEIEGQRPGKSYSIDTIGTFREQHPQAELYFIIGSDSFLELGLWRRYADILRSCNLIVVERPGRQVNDPLSALPVDIRGELRYTPASRSLEHVGGTRVHFFAGCLLDISSSEIRRLAATGRSITYLVPPQVEAYIKEQRIYSECP.

The protein belongs to the NadD family.

It carries out the reaction nicotinate beta-D-ribonucleotide + ATP + H(+) = deamido-NAD(+) + diphosphate. The protein operates within cofactor biosynthesis; NAD(+) biosynthesis; deamido-NAD(+) from nicotinate D-ribonucleotide: step 1/1. Its function is as follows. Catalyzes the reversible adenylation of nicotinate mononucleotide (NaMN) to nicotinic acid adenine dinucleotide (NaAD). The chain is Probable nicotinate-nucleotide adenylyltransferase from Pelobacter propionicus (strain DSM 2379 / NBRC 103807 / OttBd1).